Consider the following 461-residue polypeptide: Protein IQ-DOMAIN 2 (461 aa).

The disordered stretch occupies residues 1–55 (MGKKAKWFSSVKKAFSPDSKKSKQKLAEGQNGVISNPPVVDNVRQSSSSPPPALA). The IQ domain occupies 114–142 (EEAAAILIQTIFRGYLARRALRAMRGLVR). The interval 141-158 (VRLKLLMEGSVVKRQAAN) is calmodulin-binding. A disordered region spans residues 278–461 (PLESSEKEQS…GVTVTNGAGS (184 aa)). Positions 310-345 (LTRNGSTQPNTPSSARGTPRNKNSFFSPPTPSRLNQ) are enriched in polar residues. The Nuclear localization signal motif lies at 425–432 (KKRLSYPT).

This sequence belongs to the IQD family. In terms of assembly, binds to multiple calmodulin (CaM) in the presence of Ca(2+) and CaM-like proteins.

The protein localises to the nucleus. The protein resides in the cytoplasm. Its subcellular location is the cytoskeleton. In terms of biological role, may be involved in cooperative interactions with calmodulins or calmodulin-like proteins. Recruits calmodulin proteins to microtubules, thus being a potential scaffold in cellular signaling and trafficking. May associate with nucleic acids and regulate gene expression at the transcriptional or post-transcriptional level. The sequence is that of Protein IQ-DOMAIN 2 from Arabidopsis thaliana (Mouse-ear cress).